A 435-amino-acid chain; its full sequence is Methylenetetrahydrofolate--tRNA-(uracil-5-)-methyltransferase TrmFO (435 aa).

Position 9–14 (9–14 (GAGLAG)) interacts with FAD.

The protein belongs to the MnmG family. TrmFO subfamily. FAD is required as a cofactor.

Its subcellular location is the cytoplasm. It carries out the reaction uridine(54) in tRNA + (6R)-5,10-methylene-5,6,7,8-tetrahydrofolate + NADH + H(+) = 5-methyluridine(54) in tRNA + (6S)-5,6,7,8-tetrahydrofolate + NAD(+). The catalysed reaction is uridine(54) in tRNA + (6R)-5,10-methylene-5,6,7,8-tetrahydrofolate + NADPH + H(+) = 5-methyluridine(54) in tRNA + (6S)-5,6,7,8-tetrahydrofolate + NADP(+). Catalyzes the folate-dependent formation of 5-methyl-uridine at position 54 (M-5-U54) in all tRNAs. This is Methylenetetrahydrofolate--tRNA-(uracil-5-)-methyltransferase TrmFO from Staphylococcus epidermidis (strain ATCC 35984 / DSM 28319 / BCRC 17069 / CCUG 31568 / BM 3577 / RP62A).